Consider the following 545-residue polypeptide: Chaperonin GroEL (545 aa).

ATP contacts are provided by residues threonine 30–proline 33, lysine 51, aspartate 87–threonine 91, glycine 415, and aspartate 495.

Belongs to the chaperonin (HSP60) family. As to quaternary structure, forms a cylinder of 14 subunits composed of two heptameric rings stacked back-to-back. Interacts with the co-chaperonin GroES.

The protein localises to the cytoplasm. The enzyme catalyses ATP + H2O + a folded polypeptide = ADP + phosphate + an unfolded polypeptide.. Functionally, together with its co-chaperonin GroES, plays an essential role in assisting protein folding. The GroEL-GroES system forms a nano-cage that allows encapsulation of the non-native substrate proteins and provides a physical environment optimized to promote and accelerate protein folding. In Shewanella sp. (strain ANA-3), this protein is Chaperonin GroEL.